Reading from the N-terminus, the 147-residue chain is D-aminoacyl-tRNA deacylase (147 aa).

The short motif at 136–137 (GP) is the Gly-cisPro motif, important for rejection of L-amino acids element.

The protein belongs to the DTD family. Homodimer.

The protein localises to the cytoplasm. It carries out the reaction glycyl-tRNA(Ala) + H2O = tRNA(Ala) + glycine + H(+). The enzyme catalyses a D-aminoacyl-tRNA + H2O = a tRNA + a D-alpha-amino acid + H(+). Its function is as follows. An aminoacyl-tRNA editing enzyme that deacylates mischarged D-aminoacyl-tRNAs. Also deacylates mischarged glycyl-tRNA(Ala), protecting cells against glycine mischarging by AlaRS. Acts via tRNA-based rather than protein-based catalysis; rejects L-amino acids rather than detecting D-amino acids in the active site. By recycling D-aminoacyl-tRNA to D-amino acids and free tRNA molecules, this enzyme counteracts the toxicity associated with the formation of D-aminoacyl-tRNA entities in vivo and helps enforce protein L-homochirality. In Streptococcus pyogenes serotype M6 (strain ATCC BAA-946 / MGAS10394), this protein is D-aminoacyl-tRNA deacylase.